A 433-amino-acid polypeptide reads, in one-letter code: Serine--tRNA ligase (433 aa).

Thr-235–Glu-237 provides a ligand contact to L-serine. Arg-266 to Glu-268 serves as a coordination point for ATP. Glu-289 is a binding site for L-serine. Glu-353–Ser-356 contributes to the ATP binding site. Ser-388 contacts L-serine.

Belongs to the class-II aminoacyl-tRNA synthetase family. Type-1 seryl-tRNA synthetase subfamily. As to quaternary structure, homodimer. The tRNA molecule binds across the dimer.

It localises to the cytoplasm. It catalyses the reaction tRNA(Ser) + L-serine + ATP = L-seryl-tRNA(Ser) + AMP + diphosphate + H(+). The enzyme catalyses tRNA(Sec) + L-serine + ATP = L-seryl-tRNA(Sec) + AMP + diphosphate + H(+). It functions in the pathway aminoacyl-tRNA biosynthesis; selenocysteinyl-tRNA(Sec) biosynthesis; L-seryl-tRNA(Sec) from L-serine and tRNA(Sec): step 1/1. Functionally, catalyzes the attachment of serine to tRNA(Ser). Is also able to aminoacylate tRNA(Sec) with serine, to form the misacylated tRNA L-seryl-tRNA(Sec), which will be further converted into selenocysteinyl-tRNA(Sec). This chain is Serine--tRNA ligase, found in Burkholderia lata (strain ATCC 17760 / DSM 23089 / LMG 22485 / NCIMB 9086 / R18194 / 383).